A 64-amino-acid chain; its full sequence is Large ribosomal subunit protein bL35 (64 aa).

The tract at residues 1-25 (MPKLKTHSGAAKRFKKTATGKVKRS) is disordered.

This sequence belongs to the bacterial ribosomal protein bL35 family.

The polypeptide is Large ribosomal subunit protein bL35 (Koribacter versatilis (strain Ellin345)).